Here is a 292-residue protein sequence, read N- to C-terminus: 4-hydroxy-tetrahydrodipicolinate synthase (292 aa).

Threonine 45 is a pyruvate binding site. Tyrosine 133 acts as the Proton donor/acceptor in catalysis. The active-site Schiff-base intermediate with substrate is the lysine 161. A pyruvate-binding site is contributed by isoleucine 203.

Belongs to the DapA family. In terms of assembly, homodimer.

The protein localises to the cytoplasm. The catalysed reaction is L-aspartate 4-semialdehyde + pyruvate = (2S,4S)-4-hydroxy-2,3,4,5-tetrahydrodipicolinate + H2O + H(+). Its pathway is amino-acid biosynthesis; L-lysine biosynthesis via DAP pathway; (S)-tetrahydrodipicolinate from L-aspartate: step 3/4. Catalyzes the condensation of (S)-aspartate-beta-semialdehyde [(S)-ASA] and pyruvate to 4-hydroxy-tetrahydrodipicolinate (HTPA). This chain is 4-hydroxy-tetrahydrodipicolinate synthase, found in Pseudomonas syringae pv. syringae (strain B728a).